Reading from the N-terminus, the 215-residue chain is Adenylate kinase (215 aa).

10-15 serves as a coordination point for ATP; that stretch reads GAGKGT. An NMP region spans residues 30–59; that stretch reads STGDMLRAAVKAGTELGLKAKSVMDAGGLV. AMP contacts are provided by residues threonine 31, arginine 36, 57 to 59, 85 to 88, and glutamine 92; these read GLV and GFPR. The tract at residues 122-159 is LID; it reads GRRVHPASGRVYHTEYNPPKVAGKDDVSGEELVQREDD. Residues arginine 123 and 132-133 each bind ATP; that span reads VY. AMP contacts are provided by arginine 156 and arginine 167. Glycine 201 provides a ligand contact to ATP.

This sequence belongs to the adenylate kinase family. Monomer.

The protein localises to the cytoplasm. It carries out the reaction AMP + ATP = 2 ADP. It participates in purine metabolism; AMP biosynthesis via salvage pathway; AMP from ADP: step 1/1. In terms of biological role, catalyzes the reversible transfer of the terminal phosphate group between ATP and AMP. Plays an important role in cellular energy homeostasis and in adenine nucleotide metabolism. The chain is Adenylate kinase from Ectopseudomonas mendocina (strain ymp) (Pseudomonas mendocina).